Consider the following 217-residue polypeptide: Probable transaldolase (217 aa).

The active-site Schiff-base intermediate with substrate is K84.

The protein belongs to the transaldolase family. Type 3B subfamily.

The protein localises to the cytoplasm. The catalysed reaction is D-sedoheptulose 7-phosphate + D-glyceraldehyde 3-phosphate = D-erythrose 4-phosphate + beta-D-fructose 6-phosphate. It functions in the pathway carbohydrate degradation; pentose phosphate pathway; D-glyceraldehyde 3-phosphate and beta-D-fructose 6-phosphate from D-ribose 5-phosphate and D-xylulose 5-phosphate (non-oxidative stage): step 2/3. Transaldolase is important for the balance of metabolites in the pentose-phosphate pathway. This Roseiflexus sp. (strain RS-1) protein is Probable transaldolase.